The following is a 493-amino-acid chain: Glutamate--tRNA ligase (493 aa).

The short motif at 10–20 (PSPTGDPHVGT) is the 'HIGH' region element. A 'KMSKS' region motif is present at residues 251–255 (KLSKR). Lysine 254 lines the ATP pocket.

This sequence belongs to the class-I aminoacyl-tRNA synthetase family. Glutamate--tRNA ligase type 1 subfamily. As to quaternary structure, monomer.

The protein resides in the cytoplasm. It carries out the reaction tRNA(Glu) + L-glutamate + ATP = L-glutamyl-tRNA(Glu) + AMP + diphosphate. Functionally, catalyzes the attachment of glutamate to tRNA(Glu) in a two-step reaction: glutamate is first activated by ATP to form Glu-AMP and then transferred to the acceptor end of tRNA(Glu). In Pseudomonas putida (strain W619), this protein is Glutamate--tRNA ligase.